The following is a 238-amino-acid chain: Putative tyrosine-protein phosphatase OCA1 (238 aa).

Residues 1–43 (MTSKVGEYEDVPEDESRLTEENVSVPEEEVEDEDEEEDDDDDH) form a disordered region. Residue Thr2 is modified to N-acetylthreonine. Ser24 is modified (phosphoserine). Acidic residues predominate over residues 26–42 (PEEEVEDEDEEEDDDDD). Positions 72–230 (NFCPVERYLY…LVKIDKNKAP (159 aa)) constitute a Tyrosine-protein phosphatase domain. Cys168 serves as the catalytic Phosphocysteine intermediate.

Belongs to the protein-tyrosine phosphatase family.

The protein resides in the cytoplasm. It carries out the reaction O-phospho-L-tyrosyl-[protein] + H2O = L-tyrosyl-[protein] + phosphate. Functionally, putative tyrosine-protein phosphatase required for protection against superoxide stress. Involved in cell-cycle delay in response to linoleic acid hydroperoxide (LoaOOH). The protein is Putative tyrosine-protein phosphatase OCA1 (OCA1) of Saccharomyces cerevisiae (strain YJM789) (Baker's yeast).